The primary structure comprises 213 residues: MTDQSHQCVIIGIAGASASGKSLIASTLYRELREQVGDEHIGVIPEDSYYKDQSHLSMEERVKTNYDHPNAMDHSLLFQHLQALKRGSAIELPVYSYVEHTRMQETVRVEPKKVIILEGILLLTDARLREEMNFSIFVDTPLDICLMRRIKRDVNERGRSMDSVMAQYQKTVRPMFLQFIEPSKQYADIIVPCGGKNRIAIDILKAKISQFFE.

Position 15-22 (15-22) interacts with ATP; sequence GASASGKS.

This sequence belongs to the uridine kinase family.

It is found in the cytoplasm. It catalyses the reaction uridine + ATP = UMP + ADP + H(+). The catalysed reaction is cytidine + ATP = CMP + ADP + H(+). Its pathway is pyrimidine metabolism; CTP biosynthesis via salvage pathway; CTP from cytidine: step 1/3. It participates in pyrimidine metabolism; UMP biosynthesis via salvage pathway; UMP from uridine: step 1/1. The polypeptide is Uridine kinase (Salmonella paratyphi A (strain ATCC 9150 / SARB42)).